The chain runs to 109 residues: Large ribosomal subunit protein uL22 (109 aa).

The protein belongs to the universal ribosomal protein uL22 family. As to quaternary structure, part of the 50S ribosomal subunit.

This protein binds specifically to 23S rRNA; its binding is stimulated by other ribosomal proteins, e.g. L4, L17, and L20. It is important during the early stages of 50S assembly. It makes multiple contacts with different domains of the 23S rRNA in the assembled 50S subunit and ribosome. Its function is as follows. The globular domain of the protein is located near the polypeptide exit tunnel on the outside of the subunit, while an extended beta-hairpin is found that lines the wall of the exit tunnel in the center of the 70S ribosome. This is Large ribosomal subunit protein uL22 from Chromobacterium violaceum (strain ATCC 12472 / DSM 30191 / JCM 1249 / CCUG 213 / NBRC 12614 / NCIMB 9131 / NCTC 9757 / MK).